Consider the following 1516-residue polypeptide: Myosin-52 (1516 aa).

A Myosin N-terminal SH3-like domain is found at 7–62; the sequence is YKGLQCWIPDEQSQWIPGSIKDCRVEGEKAFLTVQDENENETVITVKPDDLNYEGR. The Myosin motor domain occupies 73–766; that stretch reads SDADDLTDLS…VTPLLESARD (694 aa). 167–174 contributes to the ATP binding site; that stretch reads GESGAGKT. An actin-binding region spans residues 647–669; that stretch reads LVSLMSTINETNAHYIRCIKPNE. 5 IQ domains span residues 793 to 813, 818 to 838, 840 to 865, 866 to 886, and 888 to 917; these read RKRV…RHTE, SSNI…KEFI, TKNS…EKTK, HDAT…KHYK, and LQYY…ESTK. Residues 926–1034 adopt a coiled-coil conformation; that stretch reads YRLESRLFEI…LKSQLKNYDM (109 aa). 2 positions are modified to phosphoserine: Ser1065 and Ser1072. In terms of domain architecture, Dilute spans 1163–1431; that stretch reads ERYCVHTLEY…SELSKNIVAE (269 aa).

The protein belongs to the TRAFAC class myosin-kinesin ATPase superfamily. Myosin family.

It is found in the cytoplasm. Functionally, involved in cell wall deposition where it has a role in the localization of mok1. The protein is Myosin-52 (myo52) of Schizosaccharomyces pombe (strain 972 / ATCC 24843) (Fission yeast).